Here is a 102-residue protein sequence, read N- to C-terminus: Small ribosomal subunit protein uS10 (102 aa).

This sequence belongs to the universal ribosomal protein uS10 family. In terms of assembly, part of the 30S ribosomal subunit.

Functionally, involved in the binding of tRNA to the ribosomes. This chain is Small ribosomal subunit protein uS10, found in Bacillus anthracis (strain A0248).